The sequence spans 170 residues: Cyclic pyranopterin monophosphate synthase (170 aa).

Residues 75–77 (LCH) and 113–114 (ME) each bind substrate. Aspartate 128 is a catalytic residue.

This sequence belongs to the MoaC family. Homohexamer; trimer of dimers.

The catalysed reaction is (8S)-3',8-cyclo-7,8-dihydroguanosine 5'-triphosphate = cyclic pyranopterin phosphate + diphosphate. It participates in cofactor biosynthesis; molybdopterin biosynthesis. Its function is as follows. Catalyzes the conversion of (8S)-3',8-cyclo-7,8-dihydroguanosine 5'-triphosphate to cyclic pyranopterin monophosphate (cPMP). The sequence is that of Cyclic pyranopterin monophosphate synthase from Pelotomaculum thermopropionicum (strain DSM 13744 / JCM 10971 / SI).